The chain runs to 173 residues: Gamma-crystallin S-1 (173 aa).

Beta/gamma crystallin 'Greek key' domains lie at 2–40 (GKIIFYEDRNFQGRHYECSSDCADLSPYFSRCNSIRVES) and 41–83 (DWWV…RMLP). A connecting peptide region spans residues 84–88 (HTGRS). Beta/gamma crystallin 'Greek key' domains follow at residues 89-129 (YRMR…QVMD) and 130-172 (GYWI…RRIM).

Belongs to the beta/gamma-crystallin family.

Its function is as follows. Crystallins are the dominant structural components of the vertebrate eye lens. The sequence is that of Gamma-crystallin S-1 (GS-1) from Chiloscyllium indicum (Slender bamboo shark).